The chain runs to 536 residues: Bifunctional purine biosynthesis protein PurH (536 aa).

An MGS-like domain is found at 8 to 158; the sequence is IPAPDEVRIK…KNHAYVTVVT (151 aa).

It belongs to the PurH family.

The enzyme catalyses (6R)-10-formyltetrahydrofolate + 5-amino-1-(5-phospho-beta-D-ribosyl)imidazole-4-carboxamide = 5-formamido-1-(5-phospho-D-ribosyl)imidazole-4-carboxamide + (6S)-5,6,7,8-tetrahydrofolate. The catalysed reaction is IMP + H2O = 5-formamido-1-(5-phospho-D-ribosyl)imidazole-4-carboxamide. The protein operates within purine metabolism; IMP biosynthesis via de novo pathway; 5-formamido-1-(5-phospho-D-ribosyl)imidazole-4-carboxamide from 5-amino-1-(5-phospho-D-ribosyl)imidazole-4-carboxamide (10-formyl THF route): step 1/1. It participates in purine metabolism; IMP biosynthesis via de novo pathway; IMP from 5-formamido-1-(5-phospho-D-ribosyl)imidazole-4-carboxamide: step 1/1. In Sinorhizobium medicae (strain WSM419) (Ensifer medicae), this protein is Bifunctional purine biosynthesis protein PurH.